The chain runs to 507 residues: Histidine ammonia-lyase (507 aa).

A cross-link (5-imidazolinone (Ala-Gly)) is located at residues 141 to 143; that stretch reads ASG. Ser-142 carries the post-translational modification 2,3-didehydroalanine (Ser).

The protein belongs to the PAL/histidase family. Contains an active site 4-methylidene-imidazol-5-one (MIO), which is formed autocatalytically by cyclization and dehydration of residues Ala-Ser-Gly.

Its subcellular location is the cytoplasm. It catalyses the reaction L-histidine = trans-urocanate + NH4(+). The protein operates within amino-acid degradation; L-histidine degradation into L-glutamate; N-formimidoyl-L-glutamate from L-histidine: step 1/3. The sequence is that of Histidine ammonia-lyase from Burkholderia lata (strain ATCC 17760 / DSM 23089 / LMG 22485 / NCIMB 9086 / R18194 / 383).